Consider the following 224-residue polypeptide: LexA repressor (224 aa).

Positions 31 to 51 form a DNA-binding region, H-T-H motif; that stretch reads RAEIAAELGFKSANAAEEHLQ. Catalysis depends on for autocatalytic cleavage activity residues serine 142 and lysine 179.

It belongs to the peptidase S24 family. In terms of assembly, homodimer.

It catalyses the reaction Hydrolysis of Ala-|-Gly bond in repressor LexA.. Represses a number of genes involved in the response to DNA damage (SOS response), including recA and lexA. In the presence of single-stranded DNA, RecA interacts with LexA causing an autocatalytic cleavage which disrupts the DNA-binding part of LexA, leading to derepression of the SOS regulon and eventually DNA repair. The polypeptide is LexA repressor (Verminephrobacter eiseniae (strain EF01-2)).